Reading from the N-terminus, the 239-residue chain is tRNA (guanine-N(7)-)-methyltransferase (239 aa).

S-adenosyl-L-methionine is bound by residues Glu68, Glu93, Asp120, and Asp143. The active site involves Asp143. Residues Lys147, Asp180, and 217 to 220 contribute to the substrate site; that span reads TKFE.

This sequence belongs to the class I-like SAM-binding methyltransferase superfamily. TrmB family.

The enzyme catalyses guanosine(46) in tRNA + S-adenosyl-L-methionine = N(7)-methylguanosine(46) in tRNA + S-adenosyl-L-homocysteine. It participates in tRNA modification; N(7)-methylguanine-tRNA biosynthesis. Catalyzes the formation of N(7)-methylguanine at position 46 (m7G46) in tRNA. This Vibrio cholerae serotype O1 (strain ATCC 39541 / Classical Ogawa 395 / O395) protein is tRNA (guanine-N(7)-)-methyltransferase.